We begin with the raw amino-acid sequence, 295 residues long: Protease HtpX (295 aa).

Transmembrane regions (helical) follow at residues 4–24 and 42–62; these read ILLF…TLSL and QLLV…LFIS. Position 147 (histidine 147) interacts with Zn(2+). Residue glutamate 148 is part of the active site. Histidine 151 provides a ligand contact to Zn(2+). The next 2 helical transmembrane spans lie at 158–178 and 199–219; these read VTLA…ARII and ITTI…VMWF. Glutamate 224 contacts Zn(2+).

It belongs to the peptidase M48B family. Requires Zn(2+) as cofactor.

The protein localises to the cell inner membrane. In Pseudomonas savastanoi pv. phaseolicola (strain 1448A / Race 6) (Pseudomonas syringae pv. phaseolicola (strain 1448A / Race 6)), this protein is Protease HtpX.